The chain runs to 1056 residues: MTNANTRSTPYSAVKPDVNLAKQEETILDFWDQEKIFAQSLNPEGKKTYSFYDGPPFATGLPHYGHLLAGVLKDVVPRYWTMKGYTVPRRFGWDCHGLPVEYEINKTHKIESRKDVFKMGVANYNDACRSIVKRYSTEWKTTVRRVGRWVDMENPYFTMDVSFMQSVWWVFQQLFNKGLIYEGYKVVPYSVGISTSLSNFEANQNYKMVQDPAITVMFKLVNQPDTAIMAWTTTPWTLPSNLALAVGNDIEYVKVQEKATGRKLIMAQALLSSVFKKADEEVEVLQMMKGTELVGLTYEPLFPYFGDRADKGAFRIISSDHVTTESGTGVVHMAPAFGEEDYYACAKAGIPMVNPVDDDGMFTMEVPDYAGKRVKEADKDIIADLKKRGNLFKQDTIQHSYPFCYRSDTPLIYRAVSSWFVAVEKIKEELIANNKQTSWVPDHLRDGRFGNWLEGARDWAISRNRFWGTPLPIWRNAEGEVMCIGSRAELEKLSGQKVDDLHIEFVDKITIPSPTGKSPLKRVDGVLDCWFESGSMPYAQWGYPETSVEDFKKAFPADFIAEGLDQTRGWFYTLSIIGTALFNQAPFKNVVVNGLVLAEDGRKMSKSLKNYPDPMEVLNQHGADALRLYLIDSPVVKAQELKFSEKGVYDIVRKILLRWWNSYSFFANYANIDGFVPKGDAKKSPNILDQWVLSRLNGLIANTHKEMDAYRLYNVVPHLLQFIEDLTNTYIRFNRSLFWQDGMPETKRYAYETLHEVLVTLSRLMAPFAPFMSEVTYKNLAQVLKDKKDSVHLESFPTADLSMLRPELEEAVKAMDTLVTLGRNHREKIGVKAKIPLNEIKIIHRSAELLETLKKFEPFFVDELNFRKVVYNPNEDQFVQVTAKANFPVLGKRLGPKMKAVGAGIMSMSLENILKLEGGGVVVIEGEEISLSDVEIRRAPKGDNANLSVHQIVSIEVDPTVTPEQEREGLAREIMRKIQVARKTADFQMDDKITLEIACDGALLDALNAHKDMITGETLTKNLNILALTAEPNGKHTETSDIDGQVIKIGVTNLPR.

The 'HIGH' region motif lies at 56–66; that stretch reads PFATGLPHYGH. The short motif at 603–607 is the 'KMSKS' region element; it reads KMSKS. Lys-606 provides a ligand contact to ATP.

The protein belongs to the class-I aminoacyl-tRNA synthetase family. IleS type 2 subfamily. In terms of assembly, monomer. It depends on Zn(2+) as a cofactor.

It localises to the cytoplasm. It catalyses the reaction tRNA(Ile) + L-isoleucine + ATP = L-isoleucyl-tRNA(Ile) + AMP + diphosphate. Its function is as follows. Catalyzes the attachment of isoleucine to tRNA(Ile). As IleRS can inadvertently accommodate and process structurally similar amino acids such as valine, to avoid such errors it has two additional distinct tRNA(Ile)-dependent editing activities. One activity is designated as 'pretransfer' editing and involves the hydrolysis of activated Val-AMP. The other activity is designated 'posttransfer' editing and involves deacylation of mischarged Val-tRNA(Ile). This is Isoleucine--tRNA ligase from Bdellovibrio bacteriovorus (strain ATCC 15356 / DSM 50701 / NCIMB 9529 / HD100).